Reading from the N-terminus, the 353-residue chain is Fe(3+) ions import ATP-binding protein FbpC (353 aa).

In terms of domain architecture, ABC transporter spans 9–239 (VTFENVTKKF…PASAFIADFM (231 aa)). 41-48 (GLSGCGKT) serves as a coordination point for ATP.

It belongs to the ABC transporter superfamily. Fe(3+) ion importer (TC 3.A.1.10) family. In terms of assembly, the complex is composed of two ATP-binding proteins (FbpC), two transmembrane proteins (FbpB) and a solute-binding protein (FbpA).

It is found in the cell inner membrane. The enzyme catalyses Fe(3+)(out) + ATP + H2O = Fe(3+)(in) + ADP + phosphate + H(+). In terms of biological role, part of the ABC transporter complex FbpABC involved in Fe(3+) ions import. Responsible for energy coupling to the transport system. The protein is Fe(3+) ions import ATP-binding protein FbpC of Brucella melitensis biotype 1 (strain ATCC 23456 / CCUG 17765 / NCTC 10094 / 16M).